The sequence spans 35 residues: Photosystem II reaction center protein T (35 aa).

A helical transmembrane segment spans residues 3 to 23 (ALVYTFLLVSTLGIIFFAIFF).

The protein belongs to the PsbT family. In terms of assembly, PSII is composed of 1 copy each of membrane proteins PsbA, PsbB, PsbC, PsbD, PsbE, PsbF, PsbH, PsbI, PsbJ, PsbK, PsbL, PsbM, PsbT, PsbY, PsbZ, Psb30/Ycf12, at least 3 peripheral proteins of the oxygen-evolving complex and a large number of cofactors. It forms dimeric complexes.

It is found in the plastid. Its subcellular location is the chloroplast thylakoid membrane. Found at the monomer-monomer interface of the photosystem II (PS II) dimer, plays a role in assembly and dimerization of PSII. PSII is a light-driven water plastoquinone oxidoreductase, using light energy to abstract electrons from H(2)O, generating a proton gradient subsequently used for ATP formation. The polypeptide is Photosystem II reaction center protein T (Asarum canadense (Wild ginger)).